A 368-amino-acid chain; its full sequence is tRNA 2-selenouridine synthase (368 aa).

Residues 15–138 enclose the Rhodanese domain; the sequence is FLNQHPIMDV…MRQYLIGVIE (124 aa). The active-site S-selanylcysteine intermediate is C98.

Belongs to the SelU family. As to quaternary structure, monomer.

The catalysed reaction is 5-methylaminomethyl-2-thiouridine(34) in tRNA + selenophosphate + (2E)-geranyl diphosphate + H2O + H(+) = 5-methylaminomethyl-2-selenouridine(34) in tRNA + (2E)-thiogeraniol + phosphate + diphosphate. It carries out the reaction 5-methylaminomethyl-2-thiouridine(34) in tRNA + (2E)-geranyl diphosphate = 5-methylaminomethyl-S-(2E)-geranyl-thiouridine(34) in tRNA + diphosphate. It catalyses the reaction 5-methylaminomethyl-S-(2E)-geranyl-thiouridine(34) in tRNA + selenophosphate + H(+) = 5-methylaminomethyl-2-(Se-phospho)selenouridine(34) in tRNA + (2E)-thiogeraniol. The enzyme catalyses 5-methylaminomethyl-2-(Se-phospho)selenouridine(34) in tRNA + H2O = 5-methylaminomethyl-2-selenouridine(34) in tRNA + phosphate. Its function is as follows. Involved in the post-transcriptional modification of the uridine at the wobble position (U34) of tRNA(Lys), tRNA(Glu) and tRNA(Gln). Catalyzes the conversion of 2-thiouridine (S2U-RNA) to 2-selenouridine (Se2U-RNA). Acts in a two-step process involving geranylation of 2-thiouridine (S2U) to S-geranyl-2-thiouridine (geS2U) and subsequent selenation of the latter derivative to 2-selenouridine (Se2U) in the tRNA chain. The polypeptide is tRNA 2-selenouridine synthase (Shewanella baltica (strain OS185)).